Consider the following 471-residue polypeptide: Putative multidrug resistance protein MdtD (471 aa).

Residues 1–11 (MTDLPDSTRWQ) are Periplasmic-facing. Residues 12-32 (LWIVAFGFFMQSLDTTIVNTA) form a helical membrane-spanning segment. The Cytoplasmic segment spans residues 33-48 (LPSMAQSLGESPLHMH). A helical transmembrane segment spans residues 49–69 (MVIVSYVLTVAVMLPASGWLA). Residues 70 to 76 (DKVGVRN) are Periplasmic-facing. A helical membrane pass occupies residues 77–97 (IFFTAIVLFTLGSLFCALSGT). Residues 98 to 101 (LNEL) lie on the Cytoplasmic side of the membrane. The helical transmembrane segment at 102–124 (LLARALQGVGGAMMVPVGRLTVM) threads the bilayer. Topologically, residues 125 to 137 (KIVPREQYMAAMT) are periplasmic. Residues 138–158 (FVTLPGQVGPLLGPALGGLLV) traverse the membrane as a helical segment. Residues 159 to 164 (EYASWH) lie on the Cytoplasmic side of the membrane. Residues 165 to 185 (WIFLINIPVGIIGAIATLMLM) form a helical membrane-spanning segment. At 186–196 (PNYTMQTRRFD) the chain is on the periplasmic side. The chain crosses the membrane as a helical span at residues 197–217 (LSGFLLLAVGMAVLTLALDGS). The Cytoplasmic portion of the chain corresponds to 218–224 (KGTGLSP). Residues 225–245 (LAIAGLVAVGVVALVLYLLHA) form a helical membrane-spanning segment. Residues 246–262 (RNNNRALFSLKLFRTRT) lie on the Periplasmic side of the membrane. Residues 263 to 283 (FSLGLAGSFAGRIGSGMLPFM) traverse the membrane as a helical segment. Over 284–285 (TP) the chain is Cytoplasmic. A helical transmembrane segment spans residues 286-306 (VFLQIGLGFSPFHAGLMMIPM). At 307 to 341 (VLGSMGMKRIVVQVVNRFGYRRVLVATTLGLSLVT) the chain is on the periplasmic side. The chain crosses the membrane as a helical span at residues 342 to 362 (LLFMTTALLGWYYVLPFVLFL). The Cytoplasmic segment spans residues 363–395 (QGMVNSTRFSSMNTLTLKDLPDNLASSGNSLLS). Residues 396 to 416 (MIMQLSMSIGVTIAGLLLGLF) traverse the membrane as a helical segment. The Periplasmic segment spans residues 417-430 (GSQHVSIDSGTTQT). Residues 431 to 451 (VFMYTWLSMALIIALPAFIFA) form a helical membrane-spanning segment. Topologically, residues 452–471 (RVPNDTHQNVAISRRKRSAQ) are cytoplasmic.

It belongs to the major facilitator superfamily. TCR/Tet family.

The protein resides in the cell inner membrane. The polypeptide is Putative multidrug resistance protein MdtD (Escherichia coli (strain 55989 / EAEC)).